The following is a 316-amino-acid chain: Delta(1)-pyrroline-2-carboxylate reductase (316 aa).

This sequence belongs to the ornithine cyclodeaminase/mu-crystallin family. Homodimer.

The enzyme catalyses L-proline + NAD(+) = 1-pyrroline-2-carboxylate + NADH + H(+). It catalyses the reaction L-proline + NADP(+) = 1-pyrroline-2-carboxylate + NADPH + H(+). In terms of biological role, catalyzes the reduction of Delta(1)-pyrroline-2-carboxylate (Pyr2C) to L-proline, using preferentially NADPH over NADH as the electron donor. Together with LhpH, is involved in a metabolic pathway that converts trans-3-hydroxy-L-proline (t3LHyp) to L-proline. To a much lesser extent, can also reduce Delta(1)-piperideine-2-carboxylate (Pip2C) to L-pipecolate in vitro; however, this activity has likely no physiological significance in vivo since C.psychrerythraea probably possesses no ability to metabolize D-lysine via the L-pipecolate pathway. Does not show ornithine cyclodeaminase (OCD) activity. This Colwellia psychrerythraea (strain 34H / ATCC BAA-681) (Vibrio psychroerythus) protein is Delta(1)-pyrroline-2-carboxylate reductase.